We begin with the raw amino-acid sequence, 91 residues long: Sec-independent protein translocase protein TatA (91 aa).

The helical transmembrane segment at 1–21 threads the bilayer; sequence MGSMSVWHWVIVAVVVMLLFG. The disordered stretch occupies residues 42-91; sequence GMADDETQPTNTTSVPPVGPNDPVRTLPHQGAPGTAPQQTHVPAGDHKAV.

The protein belongs to the TatA/E family. The Tat system comprises two distinct complexes: a TatABC complex, containing multiple copies of TatA, TatB and TatC subunits, and a separate TatA complex, containing only TatA subunits. Substrates initially bind to the TatABC complex, which probably triggers association of the separate TatA complex to form the active translocon.

Its subcellular location is the cell inner membrane. Functionally, part of the twin-arginine translocation (Tat) system that transports large folded proteins containing a characteristic twin-arginine motif in their signal peptide across membranes. TatA could form the protein-conducting channel of the Tat system. This is Sec-independent protein translocase protein TatA from Methylorubrum populi (strain ATCC BAA-705 / NCIMB 13946 / BJ001) (Methylobacterium populi).